Reading from the N-terminus, the 159-residue chain is Large ribosomal subunit protein uL10 (159 aa).

It belongs to the universal ribosomal protein uL10 family. In terms of assembly, part of the ribosomal stalk of the 50S ribosomal subunit. The N-terminus interacts with L11 and the large rRNA to form the base of the stalk. The C-terminus forms an elongated spine to which L12 dimers bind in a sequential fashion forming a multimeric L10(L12)X complex.

Functionally, forms part of the ribosomal stalk, playing a central role in the interaction of the ribosome with GTP-bound translation factors. This chain is Large ribosomal subunit protein uL10, found in Nautilia profundicola (strain ATCC BAA-1463 / DSM 18972 / AmH).